The primary structure comprises 223 residues: Mitochondrial cardiolipin hydrolase (223 aa).

Over 1-6 (MGCASS) the chain is Mitochondrial intermembrane. A helical membrane pass occupies residues 7 to 24 (KEEVALTPLSDVNAAKEV). The Cytoplasmic segment spans residues 25–223 (ADLKAQVDQL…QFDKLWDMFK (199 aa)). Residues 164–191 (TAAHMHHKFAIIDGRLLLNGSFNWTRQA) enclose the PLD phosphodiesterase domain. Catalysis depends on residues histidine 169, lysine 171, and aspartate 176.

Belongs to the phospholipase D family. MitoPLD/Zucchini subfamily. In terms of assembly, homodimer.

It localises to the mitochondrion outer membrane. Plays a critical role in PIWI-interacting RNA (piRNA) biogenesis. piRNAs provide essential protection against the activity of mobile genetic elements. piRNA-mediated transposon silencing is thus critical for maintaining genome stability. Backbone-non-specific, single strand-specific nuclease, cleaving either RNA or DNA substrates with similar affinity. Produces 5' phosphate and 3' hydroxyl termini, suggesting it could directly participate in the processing of primary piRNA transcripts. Has been proposed to act as a cardiolipin hydrolase to generate phosphatidic acid at mitochondrial surface. Although it cannot be excluded that it can act as a phospholipase in some circumstances, this activity could not be confirmed. This is Mitochondrial cardiolipin hydrolase from Chlamydomonas reinhardtii (Chlamydomonas smithii).